Here is a 476-residue protein sequence, read N- to C-terminus: Viral inhibitor of caspase-8-induced apoptosis (476 aa).

It belongs to the herpesviridae US22 family. Interacts with host pro-caspase-8/CASP8; this interaction inhibits CASP8 activation.

Its function is as follows. Plays a role in the inhibition of apoptosis by interacting with the pro-domain of pro-caspase-8/CASP8 and thus preventing its activation. This is Viral inhibitor of caspase-8-induced apoptosis (UL36) from Human cytomegalovirus (strain Merlin) (HHV-5).